The sequence spans 253 residues: Hydroxyacylglutathione hydrolase (253 aa).

Zn(2+) is bound by residues histidine 54, histidine 56, aspartate 58, histidine 59, histidine 112, aspartate 131, and histidine 169.

This sequence belongs to the metallo-beta-lactamase superfamily. Glyoxalase II family. Monomer. The cofactor is Zn(2+).

The enzyme catalyses an S-(2-hydroxyacyl)glutathione + H2O = a 2-hydroxy carboxylate + glutathione + H(+). It participates in secondary metabolite metabolism; methylglyoxal degradation; (R)-lactate from methylglyoxal: step 2/2. Thiolesterase that catalyzes the hydrolysis of S-D-lactoyl-glutathione to form glutathione and D-lactic acid. The chain is Hydroxyacylglutathione hydrolase from Bartonella henselae (strain ATCC 49882 / DSM 28221 / CCUG 30454 / Houston 1) (Rochalimaea henselae).